The primary structure comprises 226 residues: Peroxiredoxin-like 2C (226 aa).

The protein belongs to the peroxiredoxin-like PRXL2 family. PRXL2C subfamily. In terms of tissue distribution, expressed in gastric tissues.

Its function is as follows. May positively regulate ERK1/2 signaling and AKT1 activation leading to HIF1A up-regulation with an increased expression of glycolysis genes and enhanced glycolysis. In Homo sapiens (Human), this protein is Peroxiredoxin-like 2C.